Consider the following 188-residue polypeptide: V-type ATP synthase subunit E (188 aa).

The protein belongs to the V-ATPase E subunit family.

Its function is as follows. Produces ATP from ADP in the presence of a proton gradient across the membrane. The sequence is that of V-type ATP synthase subunit E from Thermus thermophilus (strain ATCC BAA-163 / DSM 7039 / HB27).